A 483-amino-acid chain; its full sequence is Glutamyl-tRNA(Gln) amidotransferase subunit A (483 aa).

Residues lysine 76 and serine 151 each act as charge relay system in the active site. Serine 175 (acyl-ester intermediate) is an active-site residue.

The protein belongs to the amidase family. GatA subfamily. As to quaternary structure, heterotrimer of A, B and C subunits.

It catalyses the reaction L-glutamyl-tRNA(Gln) + L-glutamine + ATP + H2O = L-glutaminyl-tRNA(Gln) + L-glutamate + ADP + phosphate + H(+). In terms of biological role, allows the formation of correctly charged Gln-tRNA(Gln) through the transamidation of misacylated Glu-tRNA(Gln) in organisms which lack glutaminyl-tRNA synthetase. The reaction takes place in the presence of glutamine and ATP through an activated gamma-phospho-Glu-tRNA(Gln). This is Glutamyl-tRNA(Gln) amidotransferase subunit A from Pseudomonas putida (strain ATCC 700007 / DSM 6899 / JCM 31910 / BCRC 17059 / LMG 24140 / F1).